The following is a 129-amino-acid chain: Large ribosomal subunit protein bL17 (129 aa).

This sequence belongs to the bacterial ribosomal protein bL17 family. Part of the 50S ribosomal subunit. Contacts protein L32.

The protein is Large ribosomal subunit protein bL17 of Pseudomonas aeruginosa (strain UCBPP-PA14).